A 378-amino-acid chain; its full sequence is Dual-specificity RNA methyltransferase RlmN 2 (378 aa).

The active-site Proton acceptor is Glu-113. The region spanning 119–355 (TEDRRTLCVS…AAYIRRNRGR (237 aa)) is the Radical SAM core domain. The cysteines at positions 126 and 361 are disulfide-linked. Residues Cys-133, Cys-137, and Cys-140 each contribute to the [4Fe-4S] cluster site. Residues 188–189 (GE), Ser-220, 242–244 (SLN), and Asn-318 contribute to the S-adenosyl-L-methionine site. Residue Cys-361 is the S-methylcysteine intermediate of the active site.

The protein belongs to the radical SAM superfamily. RlmN family. Requires [4Fe-4S] cluster as cofactor.

The protein resides in the cytoplasm. The enzyme catalyses adenosine(2503) in 23S rRNA + 2 reduced [2Fe-2S]-[ferredoxin] + 2 S-adenosyl-L-methionine = 2-methyladenosine(2503) in 23S rRNA + 5'-deoxyadenosine + L-methionine + 2 oxidized [2Fe-2S]-[ferredoxin] + S-adenosyl-L-homocysteine. It catalyses the reaction adenosine(37) in tRNA + 2 reduced [2Fe-2S]-[ferredoxin] + 2 S-adenosyl-L-methionine = 2-methyladenosine(37) in tRNA + 5'-deoxyadenosine + L-methionine + 2 oxidized [2Fe-2S]-[ferredoxin] + S-adenosyl-L-homocysteine. Its function is as follows. Specifically methylates position 2 of adenine 2503 in 23S rRNA and position 2 of adenine 37 in tRNAs. m2A2503 modification seems to play a crucial role in the proofreading step occurring at the peptidyl transferase center and thus would serve to optimize ribosomal fidelity. In Myxococcus xanthus (strain DK1622), this protein is Dual-specificity RNA methyltransferase RlmN 2.